The chain runs to 886 residues: Translation initiation factor IF-2 (886 aa).

Disordered stretches follow at residues 1 to 25 (MSET…LKRP), 50 to 229 (RRAL…PAEE), and 253 to 272 (KGAE…TGDE). Over residues 50-60 (RRALGEPHVLR) the composition is skewed to basic and acidic residues. Positions 63–73 (APALDVVAPAP) are enriched in low complexity. Positions 74 to 83 (QAAPPAPTQQ) are enriched in pro residues. The segment covering 84–106 (PQPRVASRPQPQQRSSSGVILRS) has biased composition (low complexity). Over residues 107–181 (LTEEEREARS…KRRSESEAKR (75 aa)) the composition is skewed to basic and acidic residues. A compositionally biased stretch (low complexity) spans 185 to 225 (GGEPAPAGANAAPRKAPALSAAPGSAAPSGQPGPAGAVGAR). Positions 383–553 (SRPPVVTIMG…ALQAELLDLK (171 aa)) constitute a tr-type G domain. A G1 region spans residues 392-399 (GHVDHGKT). 392-399 (GHVDHGKT) contacts GTP. The tract at residues 417 to 421 (GITQH) is G2. The segment at 439-442 (DTPG) is G3. Residues 439–443 (DTPGH) and 493–496 (NKID) contribute to the GTP site. The segment at 493-496 (NKID) is G4. Residues 529 to 531 (SAT) are G5.

The protein belongs to the TRAFAC class translation factor GTPase superfamily. Classic translation factor GTPase family. IF-2 subfamily.

The protein resides in the cytoplasm. In terms of biological role, one of the essential components for the initiation of protein synthesis. Protects formylmethionyl-tRNA from spontaneous hydrolysis and promotes its binding to the 30S ribosomal subunits. Also involved in the hydrolysis of GTP during the formation of the 70S ribosomal complex. The sequence is that of Translation initiation factor IF-2 from Methylocella silvestris (strain DSM 15510 / CIP 108128 / LMG 27833 / NCIMB 13906 / BL2).